The following is a 127-amino-acid chain: Putative 2Fe-2S ferredoxin (127 aa).

Positions 23, 54, and 58 each coordinate [2Fe-2S] cluster.

The protein belongs to the 2Fe2S Shethna-type ferredoxin family. Requires [2Fe-2S] cluster as cofactor.

In terms of biological role, ferredoxins are iron-sulfur proteins that transfer electrons in a wide variety of metabolic reactions. The chain is Putative 2Fe-2S ferredoxin (cbiW) from Priestia megaterium (Bacillus megaterium).